The chain runs to 508 residues: N-acetyl-D-hexosamine oxidase (508 aa).

Residues 26-203 (TDAQAAGRIA…TAYTFARLPE (178 aa)) enclose the FAD-binding PCMH-type domain. The 6-(S-cysteinyl)-8alpha-(pros-histidyl)-FAD (His-Cys) cross-link spans 64 to 123 (HCYEDFVSNNPDGAIVDLSLLNAPEVRADGTVRIPAGTQNWNGYLELYKRHNLTLPGGSC).

It belongs to the oxygen-dependent FAD-linked oxidoreductase family. FAD is required as a cofactor.

The catalysed reaction is N-acetyl-D-glucosamine + O2 + H2O = N-acetyl-D-glucosaminate + H2O2 + H(+). It carries out the reaction N-acetyl-D-galactosamine + O2 + H2O = N-acetyl-D-galactosaminate + H2O2 + H(+). It catalyses the reaction N-acetyl-D-glucosamine + O2 = N-acetyl-D-glucosamino-1,5-lactone + H2O2. The enzyme catalyses N-acetyl-D-galactosamine + O2 = N-acetyl-D-galactosamino-1,5-lactone + H2O2. In terms of biological role, catalyzes the oxidation of a range of monosaccharides in vitro, displaying the highest activity with N-acetylglucosamine (GlcNAc) and N-acetylgalactosamine (GalNAc), with a reduction of O2 to H2O2. Acts upon the C1 carbon of the GlcNAc or GalNAc molecule, producing the corresponding lactone, which can spontaneously hydrolyze. Its biological function is unclear, but its main function might be connected to extracellular production of hydrogen peroxide to compete with other organisms through oxidative stress, or support the action of peroxidases and peroxygenases. The polypeptide is N-acetyl-D-hexosamine oxidase (Ralstonia solanacearum (strain UW551)).